The sequence spans 784 residues: Phosphate transporter PHO1 homolog 1 (784 aa).

The Cytoplasmic portion of the chain corresponds to 1–387; that stretch reads MVKFTKQFEG…HHRKESHSVT (387 aa). The SPX domain occupies 2–335; it reads VKFTKQFEGQ…GKQILPIYLK (334 aa). The helical transmembrane segment at 388–408 threads the bilayer; it reads FFIGLFTGCFVALLAGYIIVA. At 409–429 the chain is on the extracellular side; the sequence is HLTGMYRQHSANTFYMETAYP. A helical membrane pass occupies residues 430–450; that stretch reads VLSMFGLLFLHLFLYGCNIFM. Topologically, residues 451 to 474 are cytoplasmic; that stretch reads WRKARINYSFIFELGSKNELKYRD. Residues 475–495 traverse the membrane as a helical segment; sequence VFLICTASMSAIAGVMFVHLS. Over 496–507 the chain is Extracellular; it reads LLEKGYSFRQVQ. The helical transmembrane segment at 508–528 threads the bilayer; it reads VIPGLLLLGFLLILICPLNIF. Residues 529–654 are Cytoplasmic-facing; it reads YKSSRYRLIS…TKVAYEKERS (126 aa). The EXS domain maps to 593–784; it reads MRVKYYRDLA…LPFREVDEED (192 aa). A helical membrane pass occupies residues 655–675; the sequence is LGWLCLVVAMSSVATIYQLYW. Residues 676–703 are Extracellular-facing; sequence DFVKDWGLLQHNSNNPWLRNQLMLRQKS. Residues 704 to 724 traverse the membrane as a helical segment; sequence IYYFSMVLNLVLRLAWLQTVL. Over 725-784 the chain is Cytoplasmic; sequence HSSFEHVDYRVTGLFLAALEVIRRGQWNFYRLENEHLNNAGKFRAVKTVPLPFREVDEED.

It belongs to the SYG1 (TC 2.A.94) family. As to expression, expressed in vascular cylinder of roots, leaves, stems, petals, sepals and filaments. Expressed in receptacle, stigma apex and anther connective tissue.

The protein resides in the cell membrane. Contributes to the loading of inorganic phosphate (Pi) into the root xylem vessels. The chain is Phosphate transporter PHO1 homolog 1 (PHO1-H1) from Arabidopsis thaliana (Mouse-ear cress).